Consider the following 199-residue polypeptide: MSESNHITWHDSEVTKKQRQHKNGHKSAVIWFTGLSGSGKSTVSVALEKELFNEGKQTYRLDGDNVRHGLNKNLGFSPEDRSENIRRIGEVAKLMVDAGALTVTAFISPYKEDREGVRALLEDNEFIEVYTKCSVEECEKRDPKGLYKKARSGEIPEFTGISAPYQAPENPEITIDTEHDTIEQSVEQIIRYLKEHEYI.

A disordered region spans residues 1–22; that stretch reads MSESNHITWHDSEVTKKQRQHK. 34–41 serves as a coordination point for ATP; that stretch reads GLSGSGKS. The active-site Phosphoserine intermediate is Ser108.

This sequence belongs to the APS kinase family.

The catalysed reaction is adenosine 5'-phosphosulfate + ATP = 3'-phosphoadenylyl sulfate + ADP + H(+). It participates in sulfur metabolism; hydrogen sulfide biosynthesis; sulfite from sulfate: step 2/3. In terms of biological role, catalyzes the synthesis of activated sulfate. The chain is Adenylyl-sulfate kinase from Staphylococcus epidermidis (strain ATCC 12228 / FDA PCI 1200).